The sequence spans 86 residues: Chymotrypsin inhibitor (86 aa).

The signal sequence occupies residues 1–16 (MKTLCIFLVLVVAVAA). 4 cysteine pairs are disulfide-bonded: Cys-26–Cys-58, Cys-38–Cys-50, Cys-42–Cys-82, and Cys-60–Cys-76. Positions 26–82 (CPPNKEFGSYGDCPPSCLKNPPNFCTLKLNYGCKCKEGYVLTRYQDYESDCIKPEEC) constitute a TIL domain.

The protein belongs to the serine protease inhibitor-like (TIL domain-containing) family. Only expressed in fat body.

The protein resides in the secreted. Serine protease inhibitor that inhibits chymotrypsin (IC(50)=34.13 nM, Ki=49.85 nM), microbial serine proteases (subtilisin A (IC(50)=21.31 nM, Ki=20.51 nM) and proteinase K (IC(50)=52.56 nM, Ki=65.42 nM)), as well as human neutrophil elastase (IC(50)=11.54 nM, Ki=8.74 nM), and porcine pancreatic elastase (IC(50)=19.07 nM, Ki=11.32 nM). The protein is Chymotrypsin inhibitor of Araneus ventricosus (Orbweaver spider).